A 276-amino-acid chain; its full sequence is Exosome complex component Rrp42 (276 aa).

This sequence belongs to the RNase PH family. Rrp42 subfamily. Component of the archaeal exosome complex. Forms a hexameric ring-like arrangement composed of 3 Rrp41-Rrp42 heterodimers. The hexameric ring associates with a trimer of Rrp4 and/or Csl4 subunits.

It is found in the cytoplasm. Its function is as follows. Non-catalytic component of the exosome, which is a complex involved in RNA degradation. Contributes to the structuring of the Rrp41 active site. The protein is Exosome complex component Rrp42 of Aeropyrum pernix (strain ATCC 700893 / DSM 11879 / JCM 9820 / NBRC 100138 / K1).